A 64-amino-acid chain; its full sequence is NSANPCCDPVTCKPRRGEHCVSGPCCRNCKFLNAGTICRYARGDDMNDYCTGVTSDCPRNPYKS.

Positions 1 to 64 constitute a Disintegrin domain; the sequence is NSANPCCDPV…SDCPRNPYKS (64 aa). 4 disulfides stabilise this stretch: Cys-6-Cys-29, Cys-20-Cys-26, Cys-25-Cys-50, and Cys-38-Cys-57. The Cell attachment site motif lies at 42–44; the sequence is RGD.

It belongs to the venom metalloproteinase (M12B) family. P-II subfamily. P-IId sub-subfamily. As to quaternary structure, homodimer; disulfide-linked. As to expression, expressed by the venom gland.

Its subcellular location is the secreted. Poor inhibitor of platelet aggregation. The disintegrin inhibits the adhesion of cells expressing the RGD-dependent integrin alpha-5/beta-1 (ITGA5/ITGB1) to immobilized fibronectin. Inhibition on alpha-IIb/beta-3 (ITGA2B/ITGB3) is low, and there is no inhibition on alpha-1/beta-1 (ITGA1/ITGB1), alpha-2/beta-1 (ITGA2/ITGB1) and alpha-6/beta-1 (ITGA6/ITGB1). The polypeptide is Disintegrin VA6 (Vipera ammodytes ammodytes (Western sand viper)).